A 282-amino-acid chain; its full sequence is Bis(5'-nucleosyl)-tetraphosphatase, symmetrical (282 aa).

This sequence belongs to the Ap4A hydrolase family.

It catalyses the reaction P(1),P(4)-bis(5'-adenosyl) tetraphosphate + H2O = 2 ADP + 2 H(+). Its function is as follows. Hydrolyzes diadenosine 5',5'''-P1,P4-tetraphosphate to yield ADP. The polypeptide is Bis(5'-nucleosyl)-tetraphosphatase, symmetrical (Escherichia coli O45:K1 (strain S88 / ExPEC)).